A 352-amino-acid polypeptide reads, in one-letter code: Beta-1,4-xylanase (352 aa).

Positions 1–23 (MINQRFSILVLLLILLTFSLGFL) are cleaved as a signal peptide. In terms of domain architecture, GH10 spans 29–352 (GMEIPSLKEV…KKAFWEIVKF (324 aa)). Residue Glu155 is the Proton donor of the active site. Catalysis depends on Glu262, which acts as the Nucleophile.

This sequence belongs to the glycosyl hydrolase 10 (cellulase F) family.

It localises to the secreted. It carries out the reaction Endohydrolysis of (1-&gt;4)-beta-D-xylosidic linkages in xylans.. It functions in the pathway glycan degradation; xylan degradation. This Dictyoglomus thermophilum protein is Beta-1,4-xylanase (xynA).